The following is a 290-amino-acid chain: 33 kDa chaperonin (290 aa).

2 cysteine pairs are disulfide-bonded: cysteine 235/cysteine 237 and cysteine 268/cysteine 271.

The protein belongs to the HSP33 family. Under oxidizing conditions two disulfide bonds are formed involving the reactive cysteines. Under reducing conditions zinc is bound to the reactive cysteines and the protein is inactive.

The protein localises to the cytoplasm. In terms of biological role, redox regulated molecular chaperone. Protects both thermally unfolding and oxidatively damaged proteins from irreversible aggregation. Plays an important role in the bacterial defense system toward oxidative stress. The sequence is that of 33 kDa chaperonin from Streptococcus equi subsp. zooepidemicus (strain MGCS10565).